Reading from the N-terminus, the 626-residue chain is MHYPKVYDVIVIGGGHAGTEAALAAARMGRQTLLLTHNIETLGQMSCNPAIGGIGKSHLVREIDALGGAMALAADKGGIQFRILNSRKGAAVRATRAQADRVRYKAAIRETLENQANLDIFQQAADDLIVEGDTVKGVVTQMGIRFDAKTVVLTTGTFLGGVIHVGLEKSSGGRAGDPPSIALAQRLRELKLPVGRLKTGTPPRIDARSVDFSVMTTQPGDFPSPVMSFMGDVSMHPEQVNCYITHTNEKTHDIIRGGLDRSPMYTGVIEGVGPRYCPSIEDKIHRFSDKDSHQVFLEPEGLDTHELYPNGISTSLPFDVQFELVRSIRGMENAHILRPGYAIEYDYFNPQALKFTLETKAINGLYFAGQINGTTGYEEAGAQGLLAGLNAARRAWEQEEWTPKRDQAYMGVLVDDLITLGTKEPYRMFTSRAEYRLMLREDNADQRLTTIGRELGLVDDVRWAAYCEKMEAVERETSRLQHVWAAPNNPMGKKFVEMTGADLSKECSAIDLLKRPNINFGQIAELTGSEVSQQVGEQIEIAVKYEGYINRQHEDVAQLKRLEETKIPADFDYDVVSGLSREITQKLKTVRPETLAQASRIPGVTPAAVQLVMITIRKNNMTKKTA.

Residue 13–18 (GGGHAG) coordinates FAD. Residue 273-287 (GPRYCPSIEDKIHRF) participates in NAD(+) binding.

It belongs to the MnmG family. Homodimer. Heterotetramer of two MnmE and two MnmG subunits. Requires FAD as cofactor.

It is found in the cytoplasm. In terms of biological role, NAD-binding protein involved in the addition of a carboxymethylaminomethyl (cmnm) group at the wobble position (U34) of certain tRNAs, forming tRNA-cmnm(5)s(2)U34. The chain is tRNA uridine 5-carboxymethylaminomethyl modification enzyme MnmG from Acinetobacter baumannii (strain AYE).